Reading from the N-terminus, the 1081-residue chain is Probable cellulose synthase A catalytic subunit 8 [UDP-forming] (1081 aa).

Residues 1–277 lie on the Cytoplasmic side of the membrane; it reads MDGDADAVKS…PSSRINPYRM (277 aa). Zn(2+) is bound by residues Cys19, Cys22, Cys38, Cys41, Cys46, Cys49, Cys61, and Cys64. Residues 19–65 form an RING-type; degenerate zinc finger; sequence CQICGDGVGTTAEGDVFAACDVCGFPVCRPCYEYERKDGTQACPQCK. The disordered stretch occupies residues 72-148; the sequence is KGSPAIRGEE…YDSGEIPRGY (77 aa). A compositionally biased stretch (acidic residues) spans 81–91; that stretch reads EGEDTDADDVS. The segment covering 103–112 has biased composition (basic and acidic residues); sequence QKQKIADRMR. A helical transmembrane segment spans residues 278 to 298; the sequence is VIVLRLVVLSIFLHYRITNPV. Topologically, residues 299–300 are extracellular; sequence RN. A helical transmembrane segment spans residues 301 to 321; the sequence is AYPLWLLSVICEIWFALSWIL. The Cytoplasmic portion of the chain corresponds to 322 to 864; it reads DQFPKWFPIN…INTTIYPLTS (543 aa). UDP-alpha-D-glucose contacts are provided by Ser360, Lys366, Glu367, and Asp396. Asp396 is an active-site residue. Residues 450-477 are a coiled coil; the sequence is VKDRRAMKREYEEFKVRINGLVAKAQKV. Lys537 provides a ligand contact to UDP-alpha-D-glucose. Mn(2+) contacts are provided by Lys538 and Asp562. A disordered region spans residues 660-684; sequence SLCGGRKKASKSKKKSSDKKKSNKH. A compositionally biased stretch (basic residues) spans 664–682; it reads GRKKASKSKKKSSDKKKSN. The active site involves Asp781. The helical transmembrane segment at 865–885 threads the bilayer; it reads IPLLIYCVLPAICLLTGKFII. Residues 886–890 lie on the Extracellular side of the membrane; it reads PEISN. Residues 891-911 form a helical membrane-spanning segment; that stretch reads FASIWFISLFISIFATGILEM. Residues 912 to 926 are Cytoplasmic-facing; sequence RWSGVGIDEWWRNEQ. Residues 927–947 form a helical membrane-spanning segment; sequence FWVIGGISAHLFAVFQGLLKV. The Extracellular segment spans residues 948–977; sequence LAGIDTNFTVTSKASDEDGDFAELYMFKWT. N-linked (GlcNAc...) asparagine glycosylation is present at Asn954. The chain crosses the membrane as a helical span at residues 978–998; the sequence is TLLIPPTTILIINLVGVVAGI. Residues 999–1009 lie on the Cytoplasmic side of the membrane; it reads SYAINSGYQSW. A helical transmembrane segment spans residues 1010–1030; it reads GPLFGKLFFAFWVIVHLYPFL. At 1031 to 1039 the chain is on the extracellular side; it reads KGLMGRQNR. Residues 1040 to 1060 form a helical membrane-spanning segment; sequence TPTIVVVWAILLASIFSLLWV. Over 1061 to 1081 the chain is Cytoplasmic; sequence RIDPFTTRVTGPDTQTCGINC.

It belongs to the glycosyltransferase 2 family. Plant cellulose synthase subfamily. Requires Mn(2+) as cofactor. Zn(2+) is required as a cofactor.

Its subcellular location is the cell membrane. It carries out the reaction [(1-&gt;4)-beta-D-glucosyl](n) + UDP-alpha-D-glucose = [(1-&gt;4)-beta-D-glucosyl](n+1) + UDP + H(+). The protein operates within glycan metabolism; plant cellulose biosynthesis. Functionally, probable catalytic subunit of cellulose synthase terminal complexes ('rosettes'), required for beta-1,4-glucan microfibril crystallization, a major mechanism of the cell wall formation. The sequence is that of Probable cellulose synthase A catalytic subunit 8 [UDP-forming] (CESA8) from Oryza sativa subsp. japonica (Rice).